A 292-amino-acid chain; its full sequence is MALDNINLNFSSDKQIEKCEKLSSIDNIDSLVLKKKRKVEIPEYSLIASNYFTIDKHFEHKHDKGEIYSGIKNAFELRNERATYSDIPESMAIKENILIPDQDIKAREKINIGDMRGIFSYNKSGNADKNFERSHTSSVNPDNLLESDNRNGQIGLKNHSLSIDKNIADIISLLNGSVAKSFELPVMNKNTADITPSMSLQEKSIVENDKNVFQKNSEMTYHFKQWGAGHSVSISVESGSFVLKPSDQFVGNKLDLILKQDAEGNYRFDSSQHNKGNKNNSTGYNEQSEEEC.

Cys19 and Cys292 are oxidised to a cystine. 2 disordered regions span residues 129-151 (KNFE…DNRN) and 267-292 (RFDS…EEEC). Residues 273 to 286 (HNKGNKNNSTGYNE) show a composition bias toward polar residues.

This sequence belongs to the SpaN family.

It localises to the cell outer membrane. Its function is as follows. Required for surface presentation of invasion plasmid antigens. Could play a role in preserving the translocation competence of the ipa antigens. Required for invasion and for secretion of IpaB and IpaD proteins. The protein is Surface presentation of antigens protein SpaN (spaN) of Shigella sonnei.